Reading from the N-terminus, the 415-residue chain is WD repeat and FYVE domain-containing protein 2 (415 aa).

WD repeat units follow at residues 71–103, 119–148, 202–232, and 245–284; these read HHFM…YEFS, CHAG…IVWH, AHTN…IMWD, and GHNG…VETP. The FYVE-type zinc-finger motif lies at 286 to 357; the sequence is WKTSDCCQKC…ICNDCNARMK (72 aa). Positions 292, 295, 319, 322, 327, 330, 349, and 352 each coordinate Zn(2+). Residues 373 to 403 form a WD 5 repeat; sequence EIHTGITAMHLQETLGLLVTSGQNRVIMIWD.

Plays a role in coelomocyte endocytosis. This Caenorhabditis elegans protein is WD repeat and FYVE domain-containing protein 2 (wdfy-2).